Reading from the N-terminus, the 376-residue chain is tRNA-specific 2-thiouridylase MnmA (376 aa).

ATP is bound by residues 16-23 (AMSGGVDS) and L42. C111 acts as the Nucleophile in catalysis. C111 and C210 are joined by a disulfide. G135 is a binding site for ATP. The interval 158 to 160 (KDQ) is interaction with tRNA. The active-site Cysteine persulfide intermediate is the C210.

The protein belongs to the MnmA/TRMU family.

Its subcellular location is the cytoplasm. It carries out the reaction S-sulfanyl-L-cysteinyl-[protein] + uridine(34) in tRNA + AH2 + ATP = 2-thiouridine(34) in tRNA + L-cysteinyl-[protein] + A + AMP + diphosphate + H(+). Functionally, catalyzes the 2-thiolation of uridine at the wobble position (U34) of tRNA, leading to the formation of s(2)U34. In Streptomyces avermitilis (strain ATCC 31267 / DSM 46492 / JCM 5070 / NBRC 14893 / NCIMB 12804 / NRRL 8165 / MA-4680), this protein is tRNA-specific 2-thiouridylase MnmA.